Reading from the N-terminus, the 482-residue chain is Glycogen synthase (482 aa).

Lys21 lines the ADP-alpha-D-glucose pocket.

It belongs to the glycosyltransferase 1 family. Bacterial/plant glycogen synthase subfamily.

It carries out the reaction [(1-&gt;4)-alpha-D-glucosyl](n) + ADP-alpha-D-glucose = [(1-&gt;4)-alpha-D-glucosyl](n+1) + ADP + H(+). Its pathway is glycan biosynthesis; glycogen biosynthesis. Functionally, synthesizes alpha-1,4-glucan chains using ADP-glucose. The polypeptide is Glycogen synthase (Clostridium perfringens (strain 13 / Type A)).